Here is an 848-residue protein sequence, read N- to C-terminus: Nuclear cap-binding protein subunit 1 (848 aa).

One can recognise an MIF4G domain in the interval 8–228 (LLRIGEKGPE…DLLDRIQSLA (221 aa)). The interval 767-786 (EDDKPSAMDVDSENGNPKKS) is disordered.

Belongs to the NCBP1 family. In terms of assembly, component of the nuclear cap-binding complex (CBC), a heterodimer composed of ABH1/CBP80 and CBP20 that interacts with m7GpppG-capped RNA. In terms of tissue distribution, expressed in all tissues analyzed, including roots, stems, leaves and flowers.

Its subcellular location is the nucleus. The protein resides in the cytoplasm. Functionally, component of the cap-binding complex (CBC), which binds cotranscriptionally to the 5'-cap of pre-mRNAs and is involved in various processes such as pre-mRNA splicing and RNA-mediated gene silencing (RNAi) by microRNAs (miRNAs). The CBC complex is involved in miRNA-mediated RNA interference and is required for primary miRNA processing. In the CBC complex, ABH1/CBP80 does not bind directly capped RNAs (m7GpppG-capped RNA) but is required to stabilize the movement of the N-terminal loop of CBP20 and lock the CBC into a high affinity cap-binding state with the cap structure. Involved in flowering regulation, possibly by regulating pre-mRNA splicing of FLC gene. Acts as a negative regulator of abscisic acid signaling in guard cells. The chain is Nuclear cap-binding protein subunit 1 (ABH1) from Arabidopsis thaliana (Mouse-ear cress).